The chain runs to 117 residues: Eukaryotic translation initiation factor 4E-binding protein 1 (117 aa).

Polar residues-rich tracts occupy residues 1–12 (MSAGSSCSQTPS) and 33–47 (YSTT…TTPG). Residues 1 to 47 (MSAGSSCSQTPSRAIPTRRVALGDGVQLPPGDYSTTPGGTLFSTTPG) are disordered. Serine 2 carries the N-acetylserine modification. Residues threonine 36 and threonine 40 each carry the phosphothreonine modification. At serine 43 the chain carries Phosphoserine. Residues threonine 45 and threonine 49 each carry the phosphothreonine modification. Tyrosine 53 is subject to Phosphotyrosine. Residues 53-59 (YDRKFLM) carry the YXXXXLphi motif motif. A Glycyl lysine isopeptide (Lys-Gly) (interchain with G-Cter in ubiquitin) cross-link involves residue lysine 56. Position 64 is a phosphoserine (serine 64). Positions 64-117 (SPVAKTPPKDLPAIPGVTSPTSDEPPMQASQSQLPSSPEDKRAGGEESQFEMDI) are disordered. Threonine 69 is subject to Phosphothreonine. Residues 81–99 (TSPTSDEPPMQASQSQLPS) show a composition bias toward polar residues. 5 positions are modified to phosphoserine: serine 82, serine 95, serine 99, serine 100, and serine 111. Positions 113–117 (FEMDI) match the TOS motif motif.

It belongs to the eIF4E-binding protein family. As to quaternary structure, hypophosphorylated EIF4EBP1 competes with EIF4G1/EIF4G3 to interact with EIF4E; insulin stimulated MAP-kinase (MAPK1 and MAPK3) or mTORC1 phosphorylation of EIF4EBP1 causes dissociation of the complex allowing EIF4G1/EIF4G3 to bind and consequent initiation of translation. Interacts (via TOS motif) with RPTOR; promoting phosphorylation by mTORC1. Post-translationally, phosphorylated on serine and threonine residues in response to insulin, EGF and PDGF. Phosphorylation at Thr-36, Thr-45, Ser-64 and Thr-69, corresponding to the hyperphosphorylated form, is regulated by mTORC1 and abolishes binding to EIF4E. Ubiquitinated: when eIF4E levels are low, hypophosphorylated form is ubiquitinated by the BCR(KLHL25) complex, leading to its degradation and serving as a homeostatic mechanism to maintain translation and prevent eIF4E inhibition when eIF4E levels are low. Not ubiquitinated when hyperphosphorylated (at Thr-36, Thr-45, Ser-64 and Thr-69) or associated with eIF4E. As to expression, highest expression in fat cells.

Its subcellular location is the cytoplasm. The protein localises to the nucleus. Functionally, repressor of translation initiation that regulates EIF4E activity by preventing its assembly into the eIF4F complex: hypophosphorylated form competes with EIF4G1/EIF4G3 and strongly binds to EIF4E, leading to repress translation. In contrast, hyperphosphorylated form dissociates from EIF4E, allowing interaction between EIF4G1/EIF4G3 and EIF4E, leading to initiation of translation. Mediates the regulation of protein translation by hormones, growth factors and other stimuli that signal through the MAP kinase and mTORC1 pathways. The protein is Eukaryotic translation initiation factor 4E-binding protein 1 (Eif4ebp1) of Mus musculus (Mouse).